The primary structure comprises 485 residues: D-alanine--D-alanyl carrier protein ligase (485 aa).

144–145 contacts ATP; sequence TS. A D-alanine-binding site is contributed by Asp-189. 284 to 289 provides a ligand contact to ATP; the sequence is NTYGPT. A D-alanine-binding site is contributed by Val-293. ATP contacts are provided by Asp-365 and Lys-473. Lys-473 serves as a coordination point for D-alanine.

Belongs to the ATP-dependent AMP-binding enzyme family. DltA subfamily.

It localises to the cytoplasm. It catalyses the reaction holo-[D-alanyl-carrier protein] + D-alanine + ATP = D-alanyl-[D-alanyl-carrier protein] + AMP + diphosphate. Its pathway is cell wall biogenesis; lipoteichoic acid biosynthesis. Catalyzes the first step in the D-alanylation of lipoteichoic acid (LTA), the activation of D-alanine and its transfer onto the D-alanyl carrier protein (Dcp) DltC. In an ATP-dependent two-step reaction, forms a high energy D-alanyl-AMP intermediate, followed by transfer of the D-alanyl residue as a thiol ester to the phosphopantheinyl prosthetic group of the Dcp. D-alanylation of LTA plays an important role in modulating the properties of the cell wall in Gram-positive bacteria, influencing the net charge of the cell wall. The sequence is that of D-alanine--D-alanyl carrier protein ligase from Staphylococcus aureus (strain bovine RF122 / ET3-1).